The primary structure comprises 1033 residues: SIT4-associating protein SAP190 (1033 aa).

3 disordered regions span residues 32-82, 147-213, and 768-1033; these read DQDD…TTES, PEII…QVET, and FGND…KEAF. A compositionally biased stretch (basic and acidic residues) spans 158-170; that stretch reads ILIERDRKDKKED. Residues 171 to 182 are compositionally biased toward acidic residues; it reads AEEGGDSEETTN. Over residues 183–195 the composition is skewed to basic and acidic residues; sequence DSDHDSGDERSVD. Position 774 is a phosphoserine (S774). 2 stretches are compositionally biased toward acidic residues: residues 784–793 and 825–838; these read SEDIIGDTEG and ENEE…EYSD. S857, S862, and S892 each carry phosphoserine. Basic and acidic residues predominate over residues 858–879; it reads DDGKSKSAESEFTDKISEHRDG. The segment covering 909-924 has biased composition (polar residues); it reads SRSQPSDPKLQDQNIF. Acidic residues predominate over residues 932–944; sequence GVGDDDDYMDPND. Phosphothreonine is present on T990. A Phosphoserine modification is found at S991. Positions 1000–1018 are enriched in acidic residues; it reads ISSDEEDSEDEDEENDMGN.

Belongs to the SAPS family. As to quaternary structure, associates with the SIT4 protein phosphatase catalytic subunit in a cell-cycle-dependent manner. Hyperphosphorylated in the absence of SIT4.

Its subcellular location is the cytoplasm. Functionally, positive regulator of protein phosphatase SIT4. Involved in the general amino acid control (GAAC) response regulated by TOR. Involved in the dephosphorylation of the elongator complex subunit IKI3. The protein is SIT4-associating protein SAP190 (SAP190) of Saccharomyces cerevisiae (strain ATCC 204508 / S288c) (Baker's yeast).